Here is a 467-residue protein sequence, read N- to C-terminus: MRLPREIGPIHFVGIGGIGMSGIAEVLCNLGYTVQGSDASDNANVARLREKGITVSVGHKAENVAGADVVVVSTAIKRDNPELMAARAQRIPVVRRAEMLAELMRLKSCVAIAGTHGKTTTTSMVAALLDAGGLDPTVINGGIINAYGTNARLGGGEWMVVEADESDGTFLKLPADVAIVTNVDPEHLDHFKTFEAVQDAFRAFVENVPFYGFAVMCIDHPVVQALVGKIEDRRIITYGVNPQADVRLVDLTPMGGGSSFKVVFRDRKSGATHEISDIVLPMPGRHNASNATAAIAVARELGLSDEAIRKAIGGFGGVKRRFTRTGEWNGVTVIDDYGHHPVEIAAVLKAARESSNGKVVAVVQPHRYTRLQSLFEEFCTCFNDADAVVVADVYPAGEAPIEGIDRDHFVLGLRAHGHRDVLPLPKAADLAGIVKDLAKPGDLVVCLGAGNITQWAYALPNELKALG.

ATP is bound at residue 114-120 (GTHGKTT).

Belongs to the MurCDEF family.

Its subcellular location is the cytoplasm. The enzyme catalyses UDP-N-acetyl-alpha-D-muramate + L-alanine + ATP = UDP-N-acetyl-alpha-D-muramoyl-L-alanine + ADP + phosphate + H(+). It functions in the pathway cell wall biogenesis; peptidoglycan biosynthesis. Its function is as follows. Cell wall formation. This is UDP-N-acetylmuramate--L-alanine ligase from Bradyrhizobium sp. (strain ORS 278).